Here is a 220-residue protein sequence, read N- to C-terminus: Response regulator protein TmoT (220 aa).

The 115-residue stretch at 21-135 (VIYIVDDDNA…DLLGAIRTAL (115 aa)) folds into the Response regulatory domain. D70 is subject to 4-aspartylphosphate. Residues 151–216 (LKASYESLSK…DLVRVTERLK (66 aa)) form the HTH luxR-type domain. Positions 175 to 194 (NKQTALELDISEATVKVHRH) form a DNA-binding region, H-T-H motif.

Post-translationally, phosphorylated by TmoS.

It localises to the cytoplasm. Its function is as follows. Member of the two-component regulatory system TmoS/TmoT involved in the regulation of toluene degradation. Induces expression of tmoX operon. This chain is Response regulator protein TmoT (tmoT), found in Ectopseudomonas mendocina (Pseudomonas mendocina).